Here is a 416-residue protein sequence, read N- to C-terminus: Sulfoquinovosyl glycerol-binding protein SmoF (416 aa).

A signal peptide spans 1–29 (MTLKTIRGKALMGAALCATMLTFSGQAFA). Gln40 contributes to the 3-(6-sulfo-alpha-D-quinovosyl)glycerol binding site. His41 lines the 6-sulfo-D-quinovose pocket. The 3-(6-sulfo-alpha-D-quinovosyl)glycerol site is built by Ser71, Asp95, Asp141, Gly194, Thr248, Gly303, Trp304, and Arg373. Gly303, Trp304, and Arg373 together coordinate 6-sulfo-D-quinovose.

The protein belongs to the bacterial solute-binding protein 1 family. As to quaternary structure, the complex is probably composed of two ATP-binding proteins (SmoE), two transmembrane proteins (SmoG and SmoH) and a solute-binding protein (SmoF).

Its subcellular location is the periplasm. Its function is as follows. Part of the ABC transporter complex SmoEFGH involved in sulfoquinovosyl glycerol (SQGro) uptake. Binds sulfoquinovosyl glycerol (SQGro). Can also bind sulfoquinovose (SQ), methyl alpha-sulfoquinovoside (SQMe) and a short-chain derivative of sulfoquinovosyl diacylglycerol (SQDG). Cannot bind D-glucose and D-glucuronic acid. The sequence is that of Sulfoquinovosyl glycerol-binding protein SmoF from Agrobacterium fabrum (strain C58 / ATCC 33970) (Agrobacterium tumefaciens (strain C58)).